The primary structure comprises 37 residues: Large ribosomal subunit protein bL36 (37 aa).

This sequence belongs to the bacterial ribosomal protein bL36 family.

In Aquifex aeolicus (strain VF5), this protein is Large ribosomal subunit protein bL36.